The sequence spans 346 residues: Glycerol-3-phosphate dehydrogenase [NAD(P)+] (346 aa).

5 residues coordinate NADPH: Ser11, Trp12, His32, Arg33, and Lys106. 3 residues coordinate sn-glycerol 3-phosphate: Lys106, Gly137, and Ser139. Ala141 lines the NADPH pocket. Lys193, Asp246, Ser256, Arg257, and Asn258 together coordinate sn-glycerol 3-phosphate. Lys193 (proton acceptor) is an active-site residue. Arg257 provides a ligand contact to NADPH. The NADPH site is built by Val281 and Glu283.

Belongs to the NAD-dependent glycerol-3-phosphate dehydrogenase family.

It is found in the cytoplasm. The enzyme catalyses sn-glycerol 3-phosphate + NAD(+) = dihydroxyacetone phosphate + NADH + H(+). The catalysed reaction is sn-glycerol 3-phosphate + NADP(+) = dihydroxyacetone phosphate + NADPH + H(+). It functions in the pathway membrane lipid metabolism; glycerophospholipid metabolism. Its function is as follows. Catalyzes the reduction of the glycolytic intermediate dihydroxyacetone phosphate (DHAP) to sn-glycerol 3-phosphate (G3P), the key precursor for phospholipid synthesis. The sequence is that of Glycerol-3-phosphate dehydrogenase [NAD(P)+] from Bacillus licheniformis (strain ATCC 14580 / DSM 13 / JCM 2505 / CCUG 7422 / NBRC 12200 / NCIMB 9375 / NCTC 10341 / NRRL NRS-1264 / Gibson 46).